Here is a 216-residue protein sequence, read N- to C-terminus: LexA repressor (216 aa).

Residues 28–48 (RAEIAAELGFSSANSAEEHLR) constitute a DNA-binding region (H-T-H motif). Catalysis depends on for autocatalytic cleavage activity residues serine 134 and lysine 171.

It belongs to the peptidase S24 family. As to quaternary structure, homodimer.

It catalyses the reaction Hydrolysis of Ala-|-Gly bond in repressor LexA.. Its function is as follows. Represses a number of genes involved in the response to DNA damage (SOS response), including recA and lexA. In the presence of single-stranded DNA, RecA interacts with LexA causing an autocatalytic cleavage which disrupts the DNA-binding part of LexA, leading to derepression of the SOS regulon and eventually DNA repair. The polypeptide is LexA repressor (Paraburkholderia xenovorans (strain LB400)).